We begin with the raw amino-acid sequence, 451 residues long: Uronate isomerase (451 aa).

This sequence belongs to the metallo-dependent hydrolases superfamily. Uronate isomerase family.

It carries out the reaction D-glucuronate = D-fructuronate. The catalysed reaction is aldehydo-D-galacturonate = keto-D-tagaturonate. It functions in the pathway carbohydrate metabolism; pentose and glucuronate interconversion. In Thermotoga sp. (strain RQ2), this protein is Uronate isomerase.